The primary structure comprises 422 residues: Tyrosine--tRNA ligase 1 (422 aa).

L-tyrosine is bound at residue Tyr-36. A 'HIGH' region motif is present at residues 41 to 50 (PTAGSLHIGH). Tyr-173 and Gln-177 together coordinate L-tyrosine. Positions 233-237 (KFGKT) match the 'KMSKS' region motif. An ATP-binding site is contributed by Lys-236. The region spanning 355–419 (SDVVTLLLET…GKKQFAMVKL (65 aa)) is the S4 RNA-binding domain.

The protein belongs to the class-I aminoacyl-tRNA synthetase family. TyrS type 1 subfamily. Homodimer.

It is found in the cytoplasm. The catalysed reaction is tRNA(Tyr) + L-tyrosine + ATP = L-tyrosyl-tRNA(Tyr) + AMP + diphosphate + H(+). Functionally, catalyzes the attachment of tyrosine to tRNA(Tyr) in a two-step reaction: tyrosine is first activated by ATP to form Tyr-AMP and then transferred to the acceptor end of tRNA(Tyr). This is Tyrosine--tRNA ligase 1 from Vibrio vulnificus (strain CMCP6).